The chain runs to 98 residues: Acylphosphatase (98 aa).

The Acylphosphatase-like domain occupies 12–98; the sequence is TYYVRVRGVV…ERRFERFQQQ (87 aa). Residues Arg27 and Asn45 contribute to the active site.

Belongs to the acylphosphatase family.

The catalysed reaction is an acyl phosphate + H2O = a carboxylate + phosphate + H(+). The protein is Acylphosphatase (acyP) of Burkholderia lata (strain ATCC 17760 / DSM 23089 / LMG 22485 / NCIMB 9086 / R18194 / 383).